The chain runs to 99 residues: Single insulin-like growth factor-binding domain protein-2 (99 aa).

An N-terminal signal peptide occupies residues 1-18; the sequence is MESLFIFAFGMMLSSASA. Positions 19-98 constitute an IGFBP N-terminal domain; it reads LSCIPCVPEE…GQEVGRCRKK (80 aa). Serine 20 carries O-linked (GalNAc...) serine glycosylation. Intrachain disulfides connect cysteine 21-cysteine 44, cysteine 24-cysteine 46, cysteine 29-cysteine 47, cysteine 35-cysteine 50, cysteine 58-cysteine 74, and cysteine 68-cysteine 95.

In terms of tissue distribution, expressed in hemocytes.

It is found in the secreted. In terms of biological role, has a role in the innate immune system. The chain is Single insulin-like growth factor-binding domain protein-2 from Cupiennius salei (American wandering spider).